Reading from the N-terminus, the 434-residue chain is Purple acid phosphatase 22 (434 aa).

The signal sequence occupies residues 1–22; that stretch reads MKLFGLFLSFTLLFLCPFISQA. A glycan (N-linked (GlcNAc...) asparagine) is linked at Asn-116. Fe cation contacts are provided by Asp-148, Asp-175, and Tyr-178. Asp-175 is a binding site for Zn(2+). Zn(2+) is bound by residues Asn-208 and His-292. Asn-208 contributes to the substrate binding site. His-302 (proton donor) is an active-site residue. His-329 is a binding site for Zn(2+). 329–331 contributes to the substrate binding site; that stretch reads HVH. Residue His-331 coordinates Fe cation. Asn-403 carries an N-linked (GlcNAc...) asparagine glycan.

It belongs to the metallophosphoesterase superfamily. Purple acid phosphatase family. Homodimer. It depends on Fe cation as a cofactor. Zn(2+) is required as a cofactor. In terms of tissue distribution, expressed in roots, stems, leaves, flowers and siliques.

Its subcellular location is the secreted. It catalyses the reaction a phosphate monoester + H2O = an alcohol + phosphate. This chain is Purple acid phosphatase 22 (PAP22), found in Arabidopsis thaliana (Mouse-ear cress).